Reading from the N-terminus, the 112-residue chain is Large ribosomal subunit protein P2 (112 aa).

Residues 69 to 85 are compositionally biased toward low complexity; it reads AGGAAMPAAAAGGAPAA. The tract at residues 69–112 is disordered; the sequence is AGGAAMPAAAAGGAPAAAEDKAEAKKPEAEPEEEEDDMGFSLFD. A compositionally biased stretch (basic and acidic residues) spans 86-97; it reads AEDKAEAKKPEA.

This sequence belongs to the eukaryotic ribosomal protein P1/P2 family. As to quaternary structure, P1 and P2 exist as dimers at the large ribosomal subunit. In terms of processing, phosphorylated.

Plays an important role in the elongation step of protein synthesis. This Babesia bovis protein is Large ribosomal subunit protein P2.